Reading from the N-terminus, the 594-residue chain is Probable translation initiation factor IF-2 (594 aa).

The region spanning 11–226 is the tr-type G domain; sequence LRTPIVCVMG…LIGLAQRFLE (216 aa). A G1 region spans residues 20 to 27; it reads GHVDHGKT. GTP is bound at residue 20–27; sequence GHVDHGKT. The G2 stretch occupies residues 45 to 49; sequence AITQH. Positions 81-84 are G3; it reads DTPG. GTP-binding positions include 81-85 and 135-138; these read DTPGH and NKID. The interval 135-138 is G4; sequence NKID. A G5 region spans residues 203-205; that stretch reads SAR.

This sequence belongs to the TRAFAC class translation factor GTPase superfamily. Classic translation factor GTPase family. IF-2 subfamily.

Its function is as follows. Function in general translation initiation by promoting the binding of the formylmethionine-tRNA to ribosomes. Seems to function along with eIF-2. The polypeptide is Probable translation initiation factor IF-2 (Methanocella arvoryzae (strain DSM 22066 / NBRC 105507 / MRE50)).